A 380-amino-acid polypeptide reads, in one-letter code: Cytochrome b (380 aa).

A run of 4 helical transmembrane segments spans residues 34–54 (FGSL…LLAM), 78–99 (WLIR…FLHI), 114–134 (WNTG…GYVL), and 179–199 (FFAL…IHLT). His-84 and His-98 together coordinate heme b. Positions 183 and 197 each coordinate heme b. His-202 lines the a ubiquinone pocket. A run of 4 helical transmembrane segments spans residues 227–247 (IKDI…ALFS), 289–309 (LGGV…PFLH), 321–341 (LSQT…WIGS), and 348–368 (FIII…ILFP).

This sequence belongs to the cytochrome b family. As to quaternary structure, the cytochrome bc1 complex contains 11 subunits: 3 respiratory subunits (MT-CYB, CYC1 and UQCRFS1), 2 core proteins (UQCRC1 and UQCRC2) and 6 low-molecular weight proteins (UQCRH/QCR6, UQCRB/QCR7, UQCRQ/QCR8, UQCR10/QCR9, UQCR11/QCR10 and a cleavage product of UQCRFS1). This cytochrome bc1 complex then forms a dimer. Heme b serves as cofactor.

Its subcellular location is the mitochondrion inner membrane. Its function is as follows. Component of the ubiquinol-cytochrome c reductase complex (complex III or cytochrome b-c1 complex) that is part of the mitochondrial respiratory chain. The b-c1 complex mediates electron transfer from ubiquinol to cytochrome c. Contributes to the generation of a proton gradient across the mitochondrial membrane that is then used for ATP synthesis. This is Cytochrome b (MT-CYB) from Alectoris rufa (Red-legged partridge).